The chain runs to 550 residues: Palmdelphin (550 aa).

Met1 carries the N-acetylmethionine modification. The stretch at 2–106 (EEAELVKERL…LQISTNEEAI (105 aa)) forms a coiled coil. Lys125 is covalently cross-linked (Glycyl lysine isopeptide (Lys-Gly) (interchain with G-Cter in SUMO2)). Ser135 is subject to Phosphoserine. Lys179 participates in a covalent cross-link: Glycyl lysine isopeptide (Lys-Gly) (interchain with G-Cter in SUMO1); alternate. A Glycyl lysine isopeptide (Lys-Gly) (interchain with G-Cter in SUMO2); alternate cross-link involves residue Lys179. The span at 248 to 259 (ERNSKSPTEYHE) shows a compositional bias: basic and acidic residues. The segment at 248 to 280 (ERNSKSPTEYHEPVYANPFCRPTTPQREKVTPG) is disordered. Thr271 carries the post-translational modification Phosphothreonine. Residues Ser321, Ser370, Ser384, and Ser385 each carry the phosphoserine modification. Disordered regions lie at residues 356 to 393 (VMQD…EDEK) and 463 to 528 (HPIA…IAGD). The segment covering 483–494 (KRAEVNPHENTN) has biased composition (basic and acidic residues). Ser497, Ser514, and Ser519 each carry phosphoserine.

It belongs to the paralemmin family. As to quaternary structure, interacts with GLUL. Post-translationally, phosphorylated.

The protein resides in the cytoplasm. The protein localises to the cell projection. It localises to the dendrite. It is found in the dendritic spine. This chain is Palmdelphin (PALMD), found in Bos taurus (Bovine).